A 453-amino-acid chain; its full sequence is UPF0210 protein Mbar_A3181 (453 aa).

This sequence belongs to the UPF0210 family.

In Methanosarcina barkeri (strain Fusaro / DSM 804), this protein is UPF0210 protein Mbar_A3181.